The sequence spans 361 residues: Homocitrate synthase (361 aa).

Residues 1-251 (MVLDSTLREG…KYRLDLLYRV (251 aa)) enclose the Pyruvate carboxyltransferase domain. Arginine 8 contacts 2-oxoglutarate. Glutamate 9 serves as a coordination point for Mg(2+). Histidine 68, arginine 128, and threonine 162 together coordinate 2-oxoglutarate. Positions 188 and 190 each coordinate Mg(2+). Histidine 282 acts as the Proton acceptor in catalysis.

The protein belongs to the alpha-IPM synthase/homocitrate synthase family. Homocitrate synthase LYS20/LYS21 subfamily. Mg(2+) is required as a cofactor. Requires Mn(2+) as cofactor.

It catalyses the reaction acetyl-CoA + 2-oxoglutarate + H2O = (2R)-homocitrate + CoA + H(+). Its pathway is amino-acid biosynthesis; L-lysine biosynthesis via AAA pathway; L-alpha-aminoadipate from 2-oxoglutarate: step 1/5. In terms of biological role, catalyzes the aldol-type condensation of 2-oxoglutarate with acetyl-CoA to yield homocitrate. Carries out the first step of the alpha-aminoadipate (AAA) lysine biosynthesis pathway. In Pyrococcus abyssi (strain GE5 / Orsay), this protein is Homocitrate synthase.